Here is a 490-residue protein sequence, read N- to C-terminus: Membrane-bound lytic murein transglycosylase F (490 aa).

The first 32 residues, 1–32 (MFALTAYRLRCAAWLLATGIFLLLAGCSEAKA), serve as a signal peptide directing secretion. The interval 33–269 (PTALERVQKE…RLKDRYYGHV (237 aa)) is non-LT domain. The LT domain stretch occupies residues 270–490 (DVLGYVGAYT…PDDDEGDGKL (221 aa)). Glutamate 316 is a catalytic residue. The tract at residues 467-490 (AESGLHLPGVNKTRPDDDEGDGKL) is disordered.

This sequence in the N-terminal section; belongs to the bacterial solute-binding protein 3 family. It in the C-terminal section; belongs to the transglycosylase Slt family.

Its subcellular location is the cell outer membrane. The catalysed reaction is Exolytic cleavage of the (1-&gt;4)-beta-glycosidic linkage between N-acetylmuramic acid (MurNAc) and N-acetylglucosamine (GlcNAc) residues in peptidoglycan, from either the reducing or the non-reducing ends of the peptidoglycan chains, with concomitant formation of a 1,6-anhydrobond in the MurNAc residue.. Functionally, murein-degrading enzyme that degrades murein glycan strands and insoluble, high-molecular weight murein sacculi, with the concomitant formation of a 1,6-anhydromuramoyl product. Lytic transglycosylases (LTs) play an integral role in the metabolism of the peptidoglycan (PG) sacculus. Their lytic action creates space within the PG sacculus to allow for its expansion as well as for the insertion of various structures such as secretion systems and flagella. The protein is Membrane-bound lytic murein transglycosylase F of Pseudomonas paraeruginosa (strain DSM 24068 / PA7) (Pseudomonas aeruginosa (strain PA7)).